Here is a 398-residue protein sequence, read N- to C-terminus: Phospholipase C (398 aa).

Positions 1 to 28 are cleaved as a signal peptide; sequence MKRKICKALICAALATSLWAGASTKVYA. Zn(2+) is bound by residues tryptophan 29, histidine 39, aspartate 84, histidine 96, histidine 154, aspartate 158, histidine 164, histidine 176, and glutamate 180. One can recognise a Zn-dependent PLC domain in the interval 29–278; sequence WDGKIDGTGT…HDVSEGNDPS (250 aa). The interval 275-283 is linker; it reads NDPSVGKNV. Residues 284–398 form the PLAT domain; it reads KELVAYISTS…ISGNSTYNIK (115 aa). Residues aspartate 297, glycine 299, threonine 300, aspartate 301, aspartate 321, asparagine 322, glycine 324, asparagine 325, aspartate 326, aspartate 364, and alanine 365 each coordinate Ca(2+).

The protein belongs to the bacterial zinc-metallophospholipase C family. It depends on Ca(2+) as a cofactor. Requires Zn(2+) as cofactor.

The protein localises to the secreted. The catalysed reaction is a 1,2-diacyl-sn-glycero-3-phosphocholine + H2O = phosphocholine + a 1,2-diacyl-sn-glycerol + H(+). Functionally, bacterial hemolysins are exotoxins that attack blood cell membranes and cause cell rupture. Constitutes an essential virulence factor in gas gangrene. Binds to eukaryotic membranes where it hydrolyzes both phosphatidylcholine and sphingomyelin. The diacylglycerol produced can activate both the arachidonic acid pathway, leading to modulation of the inflammatory response cascade and thrombosis, and protein kinase C, leading to activation of eukaryotic phospholipases and further membrane damage. Acts on human and mouse erythrocytes, but not on rabbit or horse erythrocytes. In Clostridium perfringens (strain ATCC 13124 / DSM 756 / JCM 1290 / NCIMB 6125 / NCTC 8237 / Type A), this protein is Phospholipase C (plc).